The primary structure comprises 314 residues: 3'-5' exoribonuclease YhaM (314 aa).

In terms of domain architecture, HD spans 163–279; sequence HVVSMLDLAK…LHYIDNLDAK (117 aa).

This sequence belongs to the YhaM family.

Its function is as follows. Shows a 3'-5' exoribonuclease activity. This chain is 3'-5' exoribonuclease YhaM, found in Bacillus cereus (strain AH187).